The chain runs to 416 residues: Queuine tRNA-ribosyltransferase accessory subunit 2 (416 aa).

Zn(2+) is bound by residues C323, C325, C328, and H354.

This sequence belongs to the queuine tRNA-ribosyltransferase family. QTRT2 subfamily. As to quaternary structure, heterodimer of a catalytic subunit and an accessory subunit. Zn(2+) serves as cofactor.

It localises to the cytoplasm. Its function is as follows. Non-catalytic subunit of the queuine tRNA-ribosyltransferase (TGT) that catalyzes the base-exchange of a guanine (G) residue with queuine (Q) at position 34 (anticodon wobble position) in tRNAs with GU(N) anticodons (tRNA-Asp, -Asn, -His and -Tyr), resulting in the hypermodified nucleoside queuosine (7-(((4,5-cis-dihydroxy-2-cyclopenten-1-yl)amino)methyl)-7-deazaguanosine). The polypeptide is Queuine tRNA-ribosyltransferase accessory subunit 2 (Drosophila mojavensis (Fruit fly)).